The following is a 117-amino-acid chain: Acidic phospholipase A2 (117 aa).

7 disulfide bridges follow: Cys11–Cys70, Cys25–Cys116, Cys27–Cys43, Cys42–Cys98, Cys49–Cys91, Cys59–Cys84, and Cys77–Cys89. Positions 26, 28, and 30 each coordinate Ca(2+). Residue His46 is part of the active site. Asp47 is a Ca(2+) binding site. N-linked (GlcNAc...) asparagine glycosylation is present at Asn80. Residue Asp92 is part of the active site.

It depends on Ca(2+) as a cofactor. Expressed by the venom gland.

Its subcellular location is the secreted. The catalysed reaction is a 1,2-diacyl-sn-glycero-3-phosphocholine + H2O = a 1-acyl-sn-glycero-3-phosphocholine + a fatty acid + H(+). Its function is as follows. Snake venom phospholipase A2 (PLA2) that shows strong myotoxicity and induces edema in mice. Shows no cytotoxicity in vitro. Has a strong anticoagulant effect in vitro. PLA2 catalyzes the calcium-dependent hydrolysis of the 2-acyl groups in 3-sn-phosphoglycerides. This Micrurus dumerilii (Coral snake) protein is Acidic phospholipase A2.